Consider the following 104-residue polypeptide: MNLLKKTYVLKLYVAGNTPNSVRALKTLKNILETDFKGVYALKVIDVLQNPQLAEEDKILATPTLSKVLPPPVRKIIGDLSDREKVLIGLDLLYEEFLEREEEL.

The protein belongs to the KaiB family. As to quaternary structure, the KaiABC complex composition changes during the circadian cycle to control KaiC phosphorylation. Complexes KaiC(6), KaiA(2-4):KaiC(6), KaiB(6):KaiC(6) and KaiC(6):KaiB(6):KaiA(12) are among the most important forms, many form cooperatively. Undergoes a major conformational rearrangment; in the free state forms homotetramers as a dimer of dimers. When bound to the CI domain of KaiC switches to a monomeric thioredoxin-fold (KaiB(fs)). KaiB(fs) binds CikA, leading it to dephosphorylate phospho-RpaA.

Key component of the KaiABC oscillator complex, which constitutes the main circadian regulator in cyanobacteria. Complex composition changes during the circadian cycle to control KaiC phosphorylation. KaiA stimulates KaiC autophosphorylation, while KaiB sequesters KaiA, leading to KaiC autodephosphorylation. Phospho-Ser-431 KaiC accumulation triggers binding of KaiB to form the KaiB(6):KaiC(6) complex, leading to changes in output regulators CikA and SasA. KaiB switches to a thioredoxin-like fold (KaiB(fs)) when bound to KaiC. KaiB(6):KaiC(6) formation exposes a site for KaiA binding that sequesters KaiA from KaiC, making the KaiC(6):KaiB(6):KaiA(12) complex that results in KaiC autodephosphorylation. In terms of biological role, a metamorphic protein which reversibly switches between an inactive tetrameric fold and a rare, thioredoxin-like monomeric fold (KaiB(fs)). KaiB(fs) binds phospho-KaiC, KaiA and CikA. KaiA and CikA compete for binding to KaiB(fs), and KaiB(fs) and SasA compete for binding to KaiC, thus the clock oscillator and output signal pathway are tightly coupled. This chain is Circadian clock oscillator protein KaiB, found in Picosynechococcus sp. (strain ATCC 27264 / PCC 7002 / PR-6) (Agmenellum quadruplicatum).